The primary structure comprises 332 residues: Phosphate acyltransferase (332 aa).

The protein belongs to the PlsX family. Homodimer. Probably interacts with PlsY.

It localises to the cytoplasm. It catalyses the reaction a fatty acyl-[ACP] + phosphate = an acyl phosphate + holo-[ACP]. Its pathway is lipid metabolism; phospholipid metabolism. Catalyzes the reversible formation of acyl-phosphate (acyl-PO(4)) from acyl-[acyl-carrier-protein] (acyl-ACP). This enzyme utilizes acyl-ACP as fatty acyl donor, but not acyl-CoA. The polypeptide is Phosphate acyltransferase (Sulfurimonas denitrificans (strain ATCC 33889 / DSM 1251) (Thiomicrospira denitrificans (strain ATCC 33889 / DSM 1251))).